Reading from the N-terminus, the 284-residue chain is uncharacterized protein (284 aa).

The 99-residue stretch at 25-123 (PILVMHGGHS…NTLTLQSAVT (99 aa)) folds into the AB hydrolase-1 domain. The active site involves Ser-96.

The protein belongs to the AB hydrolase superfamily.

This is an uncharacterized protein from Bacillus subtilis (strain 168).